We begin with the raw amino-acid sequence, 1002 residues long: UPF0182 protein alr1037 (1002 aa).

Transmembrane regions (helical) follow at residues 7–29 (FRLS…LGAE), 49–71 (RGVL…LALA), 123–145 (LRWL…VHYG), 178–200 (QVFS…LIYS), 202–224 (FFLR…YNWA), 258–280 (LLEL…TYLL), 300–319 (HLYG…YWLS), 339–361 (VVVQ…FYLL), and 382–404 (GAYL…YLIV).

This sequence belongs to the UPF0182 family.

The protein resides in the cell membrane. This chain is UPF0182 protein alr1037, found in Nostoc sp. (strain PCC 7120 / SAG 25.82 / UTEX 2576).